The sequence spans 65 residues: Ferredoxin-1 (65 aa).

In terms of domain architecture, 4Fe-4S ferredoxin-type spans 2–30 (AMKIDPELCTSCGDCEPVCPTNAIAPKKG). 8 residues coordinate [4Fe-4S] cluster: C10, C13, C16, C20, C39, C42, C51, and C55.

[4Fe-4S] cluster serves as cofactor.

In terms of biological role, ferredoxins are iron-sulfur proteins that transfer electrons in a wide variety of metabolic reactions. This ferredoxin probably participates in nitrogen fixation. In Rhodobacter capsulatus (Rhodopseudomonas capsulata), this protein is Ferredoxin-1 (fdxN).